The primary structure comprises 274 residues: Speedy protein C (274 aa).

The segment at 37–169 is speedy/Ringo box; Required for CDK-binding; the sequence is HQEVQAFLSL…FHWAWTRDRR (133 aa).

This sequence belongs to the Speedy/Ringo family. As to quaternary structure, interacts with CDK1 and CDK2. Interacts with AURKB. Expressed in a variety of tissues including bone marrow, kidney, small intestine, liver, placenta and testis.

The protein resides in the cytoplasm. Promotes progression through the cell cycle via binding and activation of CDK1 and CDK2. Involved in the spindle-assembly checkpoint. Required for recruitment of MAD2L1, BUBR1 and BUB1 to kinetochores. Required for the correct localization of the active form of Aurora B in prometaphase. This is Speedy protein C from Homo sapiens (Human).